Consider the following 593-residue polypeptide: Arginine--tRNA ligase (593 aa).

Residues 138-148 (ANPTGPLHVGH) carry the 'HIGH' region motif.

Belongs to the class-I aminoacyl-tRNA synthetase family. Monomer.

The protein resides in the cytoplasm. The catalysed reaction is tRNA(Arg) + L-arginine + ATP = L-arginyl-tRNA(Arg) + AMP + diphosphate. This Burkholderia lata (strain ATCC 17760 / DSM 23089 / LMG 22485 / NCIMB 9086 / R18194 / 383) protein is Arginine--tRNA ligase.